A 472-amino-acid polypeptide reads, in one-letter code: MAGKTLYDKLWDDHVVTQRDDGSCLLYIDRHLLHEVTSPQAFEGLQLAGRQPWRLSANVATPDHNVPTSKKERDQGIAGIEDDTSRIQVQTLDDNCKAFNIVEFGINDIRQGIVHVVGPEQGLTLPGMTVVCGDSHTATHGAFGCLAHGIGTSEVEHVLATQCLVQKKSKNMLVRVDGVLGKGVTPKDVVLAIIGKIGTAGGTGYAIEFGGQVFRDMSIEGRMTVCNMAIEAGARVGMVAVDDKTIEYVKGRSYAPKGEQWEQAVAYWNTLHSDVDAVFDAVVELNGAEIEPQVSWGTSPEMVIPVSKAVPTLEQAKDDVQRNDWTRAYQYMGLNAGQALADIQLDRVFIGSCTNSRIEDIRAAAEVVKGRKVAPSIKQAMIVPGSGLVKQQAEKEGLDKIFLEAGFEWREPGCSMCLAMNADKLQPGEHCASTSNRNFEGRQGNGGRTHLVSPAMAAAAAIAGHFVDVRSF.

[4Fe-4S] cluster-binding residues include Cys-353, Cys-414, and Cys-417.

It belongs to the aconitase/IPM isomerase family. LeuC type 1 subfamily. In terms of assembly, heterodimer of LeuC and LeuD. The cofactor is [4Fe-4S] cluster.

It carries out the reaction (2R,3S)-3-isopropylmalate = (2S)-2-isopropylmalate. The protein operates within amino-acid biosynthesis; L-leucine biosynthesis; L-leucine from 3-methyl-2-oxobutanoate: step 2/4. Functionally, catalyzes the isomerization between 2-isopropylmalate and 3-isopropylmalate, via the formation of 2-isopropylmaleate. This is 3-isopropylmalate dehydratase large subunit from Acinetobacter baumannii (strain ACICU).